The following is a 214-amino-acid chain: Killer cell lectin-like receptor subfamily B member 1 (214 aa).

Residues 1–42 (MDAPVLYAELHLANTQGLRCTSPPSPRQDACWGSGWHRVALK) lie on the Cytoplasmic side of the membrane. The chain crosses the membrane as a helical; Signal-anchor for type II membrane protein span at residues 43-63 (LGCVGLILLLMGLSVLVGFLV). Residues 64-214 (QKPPIEKCSV…WICQKTLKRV (151 aa)) are Extracellular-facing. Residues 98 to 208 (HWNKCLFISQ…CSSDNHWICQ (111 aa)) enclose the C-type lectin domain. 2 cysteine pairs are disulfide-bonded: cysteine 119/cysteine 207 and cysteine 186/cysteine 199.

It localises to the membrane. The chain is Killer cell lectin-like receptor subfamily B member 1 (Klrb1) from Rattus norvegicus (Rat).